Reading from the N-terminus, the 121-residue chain is uncharacterized protein (121 aa).

Disordered stretches follow at residues 38–76 (NQMA…KYQQ) and 91–121 (SVLR…KQEN). A compositionally biased stretch (basic residues) spans 43 to 63 (KRNKQSKKPKQTSKGVKKSSK). Low complexity predominate over residues 64 to 76 (QNKNSSKNNKYQQ).

This is an uncharacterized protein from Schizosaccharomyces pombe (strain 972 / ATCC 24843) (Fission yeast).